Here is a 358-residue protein sequence, read N- to C-terminus: Mannonate dehydratase (358 aa).

It belongs to the mannonate dehydratase family. Fe(2+) serves as cofactor. The cofactor is Mn(2+).

It catalyses the reaction D-mannonate = 2-dehydro-3-deoxy-D-gluconate + H2O. Its pathway is carbohydrate metabolism; pentose and glucuronate interconversion. Functionally, catalyzes the dehydration of D-mannonate. The chain is Mannonate dehydratase from Lactococcus lactis subsp. lactis (strain IL1403) (Streptococcus lactis).